Consider the following 87-residue polypeptide: Small ribosomal subunit protein uS15 (87 aa).

It belongs to the universal ribosomal protein uS15 family. Part of the 30S ribosomal subunit. Forms a bridge to the 50S subunit in the 70S ribosome, contacting the 23S rRNA.

In terms of biological role, one of the primary rRNA binding proteins, it binds directly to 16S rRNA where it helps nucleate assembly of the platform of the 30S subunit by binding and bridging several RNA helices of the 16S rRNA. Its function is as follows. Forms an intersubunit bridge (bridge B4) with the 23S rRNA of the 50S subunit in the ribosome. The protein is Small ribosomal subunit protein uS15 of Dehalococcoides mccartyi (strain ATCC BAA-2266 / KCTC 15142 / 195) (Dehalococcoides ethenogenes (strain 195)).